The chain runs to 157 residues: DNA gyrase inhibitor (157 aa).

This sequence belongs to the DNA gyrase inhibitor family. In terms of assembly, interacts with DNA gyrase.

It localises to the cytoplasm. Inhibits the supercoiling activity of DNA gyrase. Acts by inhibiting DNA gyrase at an early step, prior to (or at the step of) binding of DNA by the gyrase. It protects cells against toxins that target DNA gyrase, by inhibiting activity of these toxins and reducing the formation of lethal double-strand breaks in the cell. This chain is DNA gyrase inhibitor, found in Shigella boydii serotype 18 (strain CDC 3083-94 / BS512).